The chain runs to 288 residues: Beta-lactamase PSE-4 (288 aa).

The N-terminal stretch at 1 to 17 is a signal peptide; it reads MKFLLAFSLLIPSVVFA. Serine 65 (acyl-ester intermediate) is an active-site residue. A disulfide bridge links cysteine 72 with cysteine 118. 229–231 is a binding site for substrate; it reads RSG.

Belongs to the class-A beta-lactamase family.

It catalyses the reaction a beta-lactam + H2O = a substituted beta-amino acid. Hydrolyzes both carbenicillin and oxacillin. This chain is Beta-lactamase PSE-4 (pse4), found in Pseudomonas aeruginosa.